We begin with the raw amino-acid sequence, 773 residues long: Beta-hexosaminidase B (773 aa).

The first 19 residues, M1–A19, serve as a signal peptide directing secretion. 3 disulfide bridges follow: C46–C53, C389–C397, and C496–C542. Catalysis depends on E531, which acts as the Proton donor.

This sequence belongs to the glycosyl hydrolase 20 family.

It carries out the reaction Hydrolysis of terminal non-reducing N-acetyl-D-hexosamine residues in N-acetyl-beta-D-hexosaminides.. This is Beta-hexosaminidase B (nag096) from Pseudoalteromonas piscicida.